Here is a 352-residue protein sequence, read N- to C-terminus: Ion-translocating oxidoreductase complex subunit D (352 aa).

The next 4 helical transmembrane spans lie at 20–40 (IMLL…WFFG), 42–62 (GTLV…ALVL), 89–109 (IPPL…VIIA), and 123–143 (PAMI…TSWL). Position 187 is an FMN phosphoryl threonine (threonine 187). The next 5 membrane-spanning stretches (helical) occupy residues 214–234 (ILAG…GLWL), 242–262 (WHIP…GWLF), 267–287 (LAAP…FFIL), 301–321 (LIFG…GGYP), and 322–342 (DGVA…DYYT).

This sequence belongs to the NqrB/RnfD family. As to quaternary structure, the complex is composed of six subunits: RsxA, RsxB, RsxC, RsxD, RsxE and RsxG. FMN serves as cofactor.

It localises to the cell inner membrane. Its function is as follows. Part of a membrane-bound complex that couples electron transfer with translocation of ions across the membrane. Required to maintain the reduced state of SoxR. In Shigella sonnei (strain Ss046), this protein is Ion-translocating oxidoreductase complex subunit D.